A 601-amino-acid polypeptide reads, in one-letter code: Nuclear envelope protein ndc1 (601 aa).

Topologically, residues 1–34 (MVMLRTSFPSGSRTKAVRYHTLLRPILQQRFLRA) are cytoplasmic. The chain crosses the membrane as a helical span at residues 35-55 (CFALLCLCCITSYWFSSGPFI). The Perinuclear space portion of the chain corresponds to 56 to 58 (SLS). A helical transmembrane segment spans residues 59 to 79 (FWFLSLVRGFVCFFFMFPYFV). The Cytoplasmic portion of the chain corresponds to 80–106 (MLKSRMSTQKVTKQSLGAQLFYDFSPK). A helical transmembrane segment spans residues 107–127 (SFFLVYLTFAVSVSCLCLFYI). Residues 128–153 (KGHASSIRLQWIASPNAYELPSLNER) are Perinuclear space-facing. A helical membrane pass occupies residues 154–174 (FVYMTYFSHILILALTVEHLY). The Cytoplasmic portion of the chain corresponds to 175–182 (LQRDSPSR). A helical transmembrane segment spans residues 183-203 (PVINVSFFNYIFQNLGWLIRF). Topologically, residues 204-256 (SFRKSIICCLFTPFSYAILRSYIWRFAALLTSCCRRIAYTKTPPKWPLSLRLL) are perinuclear space. Residues 257-277 (LHSFWMAFIVCLTFQIALLIF) form a helical membrane-spanning segment. Residues 278–601 (RVFLYSGPMI…VLFREYKSNS (324 aa)) are Cytoplasmic-facing.

The protein belongs to the NDC1 family. As to quaternary structure, component of the nuclear pore complex (NPC). NPC constitutes the exclusive means of nucleocytoplasmic transport. NPCs allow the passive diffusion of ions and small molecules and the active, nuclear transport receptor-mediated bidirectional transport of macromolecules such as proteins, RNAs, ribonucleoparticles (RNPs), and ribosomal subunits across the nuclear envelope. Due to its 8-fold rotational symmetry, all subunits are present with 8 copies or multiples thereof.

The protein localises to the nucleus. Its subcellular location is the nuclear pore complex. The protein resides in the nucleus membrane. It is found in the cytoplasm. It localises to the cytoskeleton. The protein localises to the microtubule organizing center. Its subcellular location is the spindle pole body. Functionally, component of the nuclear pore complex (NPC) and the spindle pole body (SPB), which plays a key role in de novo assembly and insertion of both structures in the nuclear envelope. Involved in the formation of the bipolar mitotic spindle. Anchors the spindle pole body in the nuclear envelope. This Schizosaccharomyces pombe (strain 972 / ATCC 24843) (Fission yeast) protein is Nuclear envelope protein ndc1 (cut11).